Here is a 737-residue protein sequence, read N- to C-terminus: Transcription termination factor Rho (737 aa).

Residues 1–396 (MSGPCSAHRV…ENSYLPDPTD (396 aa)) are disordered. 3 stretches are compositionally biased toward low complexity: residues 16–28 (RPTIRSPRITRSS), 62–86 (ASRASSESRSESGSGLSAEGSGSDA), and 101–111 (DAESAPTAADT). Composition is skewed to basic and acidic residues over residues 145–175 (PRAESPRSEPRTESRPEPRAENGSETRHESR), 196–256 (SMER…DRRD), 266–279 (GRPDNRGPGGDRHQ), and 286–324 (DRSHDRGPDRNNERAFDRPERPDRQGESSDRFDSQDRGG). Positions 328–339 (RNGRRGRNRFRR) are enriched in basic residues. Residues 347-360 (APISGSHAPSQGSP) are compositionally biased toward polar residues. One can recognise a Rho RNA-BD domain in the interval 367–439 (EGTMAGWFDP…IEVQTLNDGS (73 aa)). A compositionally biased stretch (basic and acidic residues) spans 376–387 (PSRDGGFLRRPE). ATP contacts are provided by residues 487 to 492 (GYGQRA), 499 to 504 (RAGKTT), and Arg-530.

It belongs to the Rho family. As to quaternary structure, homohexamer. The homohexamer assembles into an open ring structure.

In terms of biological role, facilitates transcription termination by a mechanism that involves Rho binding to the nascent RNA, activation of Rho's RNA-dependent ATPase activity, and release of the mRNA from the DNA template. This is Transcription termination factor Rho from Gemmatimonas aurantiaca (strain DSM 14586 / JCM 11422 / NBRC 100505 / T-27).